The sequence spans 484 residues: Trigger factor (484 aa).

Residues 162 to 243 (GDFISIDLSA…VKSVKERELP (82 aa)) enclose the PPIase FKBP-type domain. A disordered region spans residues 427–484 (DGNTIDTSEFFGKPPENDVTDLLDDDADGDAGVDADGDTENSAEPADADSADTAQGAG). A compositionally biased stretch (acidic residues) spans 444 to 476 (DVTDLLDDDADGDAGVDADGDTENSAEPADADS).

The protein belongs to the FKBP-type PPIase family. Tig subfamily.

Its subcellular location is the cytoplasm. It catalyses the reaction [protein]-peptidylproline (omega=180) = [protein]-peptidylproline (omega=0). Its function is as follows. Involved in protein export. Acts as a chaperone by maintaining the newly synthesized protein in an open conformation. Functions as a peptidyl-prolyl cis-trans isomerase. The sequence is that of Trigger factor from Mycobacterium ulcerans (strain Agy99).